Consider the following 467-residue polypeptide: E3 ubiquitin-protein ligase IE61 (467 aa).

The segment at 19–58 (CTICMSTVSDLGKTMPCLHDFCFVCIRAWTSTSVQCPLCR) adopts an RING-type zinc-finger fold. 4 disordered regions span residues 101 to 171 (GDVI…GVTK), 205 to 238 (QQPR…FRAT), 344 to 364 (IVRP…RDTR), and 413 to 467 (DSAC…MKKS). Residues 116-143 (ESIQQPTSRSSREPIQSPNPGPLQSSAR) are compositionally biased toward polar residues. The segment covering 149-161 (SPSDSQQDSIQPP) has biased composition (low complexity). The segment covering 162–171 (TRDSSPGVTK) has biased composition (polar residues). A compositionally biased stretch (basic and acidic residues) spans 228–238 (RTMDRLPFRAT). Low complexity-rich tracts occupy residues 429–443 (GESN…TSGS) and 450–459 (KSSAGKAGKG).

Interacts with host BTRC; this interaction seems to inactivate SCF-mediated protein degradation in general. Auto-ubiquitinated.

It carries out the reaction S-ubiquitinyl-[E2 ubiquitin-conjugating enzyme]-L-cysteine + [acceptor protein]-L-lysine = [E2 ubiquitin-conjugating enzyme]-L-cysteine + N(6)-ubiquitinyl-[acceptor protein]-L-lysine.. Functionally, RING-finger E3 ubiquitin ligase that degrades host SP100, one of the major components of ND10 nuclear bodies, thereby disrupting the organization of these bodies. Also plays a role in the inhibition of host NF-kappa-B pathway by blocking the SCF(BTRC)-mediated addition of ubiquitin chains to host I-kappa-B-alpha/NFKBIA, thereby interfering with its degradation. This Varicella-zoster virus (strain Dumas) (HHV-3) protein is E3 ubiquitin-protein ligase IE61 (61).